Consider the following 181-residue polypeptide: ADP-ribosylation factor-like protein 1 (181 aa).

Residue glycine 2 is the site of N-myristoyl glycine attachment. GTP is bound by residues 24–31, 45–48, glycine 70, 126–129, and 160–161; these read GLDGAGKT, TIPT, NKQD, and AT. Residues threonine 31 and threonine 48 each contribute to the Mg(2+) site.

This sequence belongs to the small GTPase superfamily. Arf family. The GTP-bound form interacts with GOLGA1. The GTP-bound form interacts with GOLGA4 and RGPD8. The GTP-bound form directly interacts with ARFIP2. Binds to SCOC, preferentially in its GTP-bound form. May interact with UNC119. Interacts with ARFIP1; this interaction directs ARFIP1 to the trans-Golgi membranes. Interacts with ARFGEF1 (via N-terminus).

The protein localises to the golgi apparatus membrane. The protein resides in the golgi apparatus. It is found in the trans-Golgi network membrane. It localises to the membrane. In terms of biological role, GTP-binding protein that recruits several effectors, such as golgins, arfaptins and Arf-GEFs to the trans-Golgi network, and modulates their functions at the Golgi complex. Plays thereby a role in a wide range of fundamental cellular processes, including cell polarity, innate immunity, or protein secretion mediated by arfaptins, which were shown to play a role in maintaining insulin secretion from pancreatic beta cells. The polypeptide is ADP-ribosylation factor-like protein 1 (ARL1) (Bos taurus (Bovine)).